The following is a 427-amino-acid chain: Large ribosomal subunit protein uL4 (427 aa).

N-acetylalanine is present on Ala2. The residue at position 14 (Lys14) is an N6-acetyllysine. Arg97 is subject to Omega-N-methylarginine. Lys106 is modified (N6-acetyllysine). Residue Lys239 forms a Glycyl lysine isopeptide (Lys-Gly) (interchain with G-Cter in SUMO2) linkage. Lys259 carries the N6-acetyllysine modification. Phosphothreonine is present on Thr266. Phosphoserine occurs at positions 290 and 295. Arg300 carries the citrulline modification. A Glycyl lysine isopeptide (Lys-Gly) (interchain with G-Cter in SUMO2) cross-link involves residue Lys327. An N6-acetyllysine mark is found at Lys333 and Lys353. Residue Lys364 is modified to N6-acetyllysine; alternate. Residue Lys364 forms a Glycyl lysine isopeptide (Lys-Gly) (interchain with G-Cter in SUMO1); alternate linkage. Ser365 carries the post-translational modification Phosphoserine. The segment at 369-427 (AAVAGKKPVVGKKGKKVAVGVKKQKKPLVGKKAAATKKPAPEKKSTEKKPTTEEKKPAA) is disordered. The span at 377–397 (VVGKKGKKVAVGVKKQKKPLV) shows a compositional bias: basic residues. The segment covering 407 to 427 (PAPEKKSTEKKPTTEEKKPAA) has biased composition (basic and acidic residues).

The protein belongs to the universal ribosomal protein uL4 family. As to quaternary structure, component of the large ribosomal subunit. May bind IPO9 with low affinity. Interacts with RBM3. Post-translationally, citrullinated by PADI4.

It localises to the cytoplasm. Functionally, component of the large ribosomal subunit. The ribosome is a large ribonucleoprotein complex responsible for the synthesis of proteins in the cell. The chain is Large ribosomal subunit protein uL4 (RPL4) from Macaca fascicularis (Crab-eating macaque).